The primary structure comprises 228 residues: 2,3-bisphosphoglycerate-dependent phosphoglycerate mutase (228 aa).

Substrate is bound by residues 8-15 (RHGLSEWN), 21-22 (TG), R60, 87-90 (ERHY), K98, 114-115 (RR), and 183-184 (GN). The Tele-phosphohistidine intermediate role is filled by H9. E87 (proton donor/acceptor) is an active-site residue.

Belongs to the phosphoglycerate mutase family. BPG-dependent PGAM subfamily.

The enzyme catalyses (2R)-2-phosphoglycerate = (2R)-3-phosphoglycerate. The protein operates within carbohydrate degradation; glycolysis; pyruvate from D-glyceraldehyde 3-phosphate: step 3/5. Functionally, catalyzes the interconversion of 2-phosphoglycerate and 3-phosphoglycerate. The chain is 2,3-bisphosphoglycerate-dependent phosphoglycerate mutase from Enterococcus faecalis (strain ATCC 700802 / V583).